We begin with the raw amino-acid sequence, 303 residues long: Probable 5-dehydro-4-deoxyglucarate dehydratase (303 aa).

The protein belongs to the DapA family.

The catalysed reaction is 5-dehydro-4-deoxy-D-glucarate + H(+) = 2,5-dioxopentanoate + CO2 + H2O. Its pathway is carbohydrate acid metabolism; D-glucarate degradation; 2,5-dioxopentanoate from D-glucarate: step 2/2. The protein is Probable 5-dehydro-4-deoxyglucarate dehydratase of Agrobacterium fabrum (strain C58 / ATCC 33970) (Agrobacterium tumefaciens (strain C58)).